We begin with the raw amino-acid sequence, 100 residues long: Putative pterin-4-alpha-carbinolamine dehydratase (100 aa).

Belongs to the pterin-4-alpha-carbinolamine dehydratase family.

The catalysed reaction is (4aS,6R)-4a-hydroxy-L-erythro-5,6,7,8-tetrahydrobiopterin = (6R)-L-erythro-6,7-dihydrobiopterin + H2O. This Bradyrhizobium diazoefficiens (strain JCM 10833 / BCRC 13528 / IAM 13628 / NBRC 14792 / USDA 110) protein is Putative pterin-4-alpha-carbinolamine dehydratase.